The following is a 160-amino-acid chain: Phosphopantetheine adenylyltransferase (160 aa).

T9 is a substrate binding site. Residues T9–F10 and H17 each bind ATP. The substrate site is built by K41, L73, and R87. ATP-binding positions include G88–R90, E98, and L123–T129.

It belongs to the bacterial CoaD family. In terms of assembly, homohexamer. Requires Mg(2+) as cofactor.

It is found in the cytoplasm. It catalyses the reaction (R)-4'-phosphopantetheine + ATP + H(+) = 3'-dephospho-CoA + diphosphate. It functions in the pathway cofactor biosynthesis; coenzyme A biosynthesis; CoA from (R)-pantothenate: step 4/5. Its function is as follows. Reversibly transfers an adenylyl group from ATP to 4'-phosphopantetheine, yielding dephospho-CoA (dPCoA) and pyrophosphate. The sequence is that of Phosphopantetheine adenylyltransferase from Marinobacter nauticus (strain ATCC 700491 / DSM 11845 / VT8) (Marinobacter aquaeolei).